The primary structure comprises 276 residues: Malectin-A (276 aa).

Positions 1–26 (MLSIRTVLGPLATILLTVLGPFGAHG) are cleaved as a signal peptide. The Lumenal segment spans residues 27–253 (SGLADKVIWA…TPNPYASDNS (227 aa)). The a carbohydrate site is built by Tyr-67, Tyr-89, Tyr-116, Phe-117, and Asp-186. The disordered stretch occupies residues 204-247 (PMLQPHPGLEKKEEEEEEEEEEGSTSKKQINKNRVQSGPRTPNP). Over residues 216-226 (EEEEEEEEEEG) the composition is skewed to acidic residues. Residues 229-247 (SKKQINKNRVQSGPRTPNP) are compositionally biased toward polar residues. Asn-252 carries an N-linked (GlcNAc...) asparagine glycan. The chain crosses the membrane as a helical span at residues 254–274 (SLMFPILVAFGVFIPTLFCLC). Over 275-276 (RL) the chain is Cytoplasmic.

It belongs to the malectin family. Widely expressed throughout development including the anterior neuroectoderm and neural crest at stages 18 and 20, and the retina, hatching gland, otic vesicle, epibranchial placodes, pronephros and tail tip of later states. At stage 41, expressed in the liver, pancreas, branchial arches and proctodeum. Expressed broadly in adults in fat, intestine, gall bladder, eye, muscle, kidney, stomach, liver, heart, pancreas and lung.

It localises to the endoplasmic reticulum membrane. Carbohydrate-binding protein with a strong ligand preference for Glc2-N-glycan. May play a role in the early steps of protein N-glycosylation. Can bind di- or higher oligomers but not monomers of glucose, including maltose, maltotriose, maltotetraose, maltoheptaose, nigerose, kojibose, cellobiose and isomaltose, although based on their subcellular locations, these are unlikely to all be physiological ligands. This Xenopus laevis (African clawed frog) protein is Malectin-A.